Consider the following 552-residue polypeptide: Non-structural protein NS1 (552 aa).

It belongs to the orbivirus non-structural protein NS1 family.

This is Non-structural protein NS1 (Segment-5) from Antilocapra americana (Pronghorn).